The chain runs to 133 residues: ATP synthase epsilon chain, chloroplastic (133 aa).

This sequence belongs to the ATPase epsilon chain family. F-type ATPases have 2 components, CF(1) - the catalytic core - and CF(0) - the membrane proton channel. CF(1) has five subunits: alpha(3), beta(3), gamma(1), delta(1), epsilon(1). CF(0) has three main subunits: a, b and c.

The protein localises to the plastid. It localises to the chloroplast thylakoid membrane. Produces ATP from ADP in the presence of a proton gradient across the membrane. This chain is ATP synthase epsilon chain, chloroplastic, found in Daucus carota (Wild carrot).